Reading from the N-terminus, the 307-residue chain is Mitochondrial glycine transporter (307 aa).

Solcar repeat units follow at residues 8–87, 115–199, and 221–305; these read PRNS…MRSS, LTMY…SKQL, and TSTT…LVKR. The next 6 membrane-spanning stretches (helical) occupy residues 14 to 39, 62 to 88, 121 to 146, 174 to 197, 225 to 251, and 280 to 298; these read LIGG…TRIQ, GTLP…RSSL, LLTG…VRYE, GFGA…EKSK, VNTT…KTRM, and GLSM…AWGI.

The protein belongs to the mitochondrial carrier (TC 2.A.29) family. SLC25A38 subfamily.

It localises to the mitochondrion. The protein resides in the mitochondrion inner membrane. The catalysed reaction is glycine(in) = glycine(out). Mitochondrial glycine transporter that imports glycine into the mitochondrial matrix. Plays an important role in providing glycine for the first enzymatic step in heme biosynthesis, the condensation of glycine with succinyl-CoA to produce 5-aminolevulinate (ALA) in the mitochondrial matrix. The sequence is that of Mitochondrial glycine transporter from Saccharomyces cerevisiae (strain ATCC 204508 / S288c) (Baker's yeast).